A 210-amino-acid chain; its full sequence is Redox-sensing transcriptional repressor Rex (210 aa).

The segment at residues 16–55 (IYSRFLKRLDKKGITTVSSGDIAEGVGVSPAQVRKDLAYF) is a DNA-binding region (H-T-H motif). 90-95 (GAGNLG) contributes to the NAD(+) binding site.

It belongs to the transcriptional regulatory Rex family. In terms of assembly, homodimer.

It is found in the cytoplasm. Its function is as follows. Modulates transcription in response to changes in cellular NADH/NAD(+) redox state. In Desulforamulus reducens (strain ATCC BAA-1160 / DSM 100696 / MI-1) (Desulfotomaculum reducens), this protein is Redox-sensing transcriptional repressor Rex.